Here is a 343-residue protein sequence, read N- to C-terminus: DNA-directed RNA polymerase subunit alpha (343 aa).

Positions 1 to 239 are alpha N-terminal domain (alpha-NTD); it reads MGETVTIQKN…DQLNVFVNFE (239 aa). Residues 255–343 form an alpha C-terminal domain (alpha-CTD) region; sequence FNPAFLKKVD…ELAKRFEDHY (89 aa).

The protein belongs to the RNA polymerase alpha chain family. Homodimer. The RNAP catalytic core consists of 2 alpha, 1 beta, 1 beta' and 1 omega subunit. When a sigma factor is associated with the core the holoenzyme is formed, which can initiate transcription.

The enzyme catalyses RNA(n) + a ribonucleoside 5'-triphosphate = RNA(n+1) + diphosphate. In terms of biological role, DNA-dependent RNA polymerase catalyzes the transcription of DNA into RNA using the four ribonucleoside triphosphates as substrates. The polypeptide is DNA-directed RNA polymerase subunit alpha (Bradyrhizobium sp. (strain BTAi1 / ATCC BAA-1182)).